The sequence spans 387 residues: Flap endonuclease 1 (387 aa).

The segment at 1–104 (MGILGLSKLI…GELAKRAERR (104 aa)) is N-domain. Asp34 serves as a coordination point for Mg(2+). Residues Arg47 and Arg70 each coordinate DNA. Mg(2+)-binding residues include Asp86, Glu158, Glu160, Asp179, and Asp181. An I-domain region spans residues 122-253 (GIEKFNRRLV…KRAIELINNY (132 aa)). Glu158 contacts DNA. DNA-binding residues include Gly231 and Asp233. Asp233 lines the Mg(2+) pocket. The interval 336-344 (TQVRLDSFF) is interaction with PCNA. The tract at residues 345–387 (KTLPSTPNATNAAKRKAEEAKKSANNKKAKTSGGGGGRGRRPK) is disordered.

It belongs to the XPG/RAD2 endonuclease family. FEN1 subfamily. Interacts with PCNA. Three molecules of FEN1 bind to one PCNA trimer with each molecule binding to one PCNA monomer. PCNA stimulates the nuclease activity without altering cleavage specificity. The cofactor is Mg(2+). Post-translationally, phosphorylated. Phosphorylation upon DNA damage induces relocalization to the nuclear plasma.

It is found in the nucleus. Its subcellular location is the nucleolus. The protein resides in the nucleoplasm. It localises to the mitochondrion. Functionally, structure-specific nuclease with 5'-flap endonuclease and 5'-3' exonuclease activities involved in DNA replication and repair. During DNA replication, cleaves the 5'-overhanging flap structure that is generated by displacement synthesis when DNA polymerase encounters the 5'-end of a downstream Okazaki fragment. It enters the flap from the 5'-end and then tracks to cleave the flap base, leaving a nick for ligation. Also involved in the long patch base excision repair (LP-BER) pathway, by cleaving within the apurinic/apyrimidinic (AP) site-terminated flap. Acts as a genome stabilization factor that prevents flaps from equilibrating into structures that lead to duplications and deletions. Also possesses 5'-3' exonuclease activity on nicked or gapped double-stranded DNA, and exhibits RNase H activity. Also involved in replication and repair of rDNA and in repairing mitochondrial DNA. In Drosophila yakuba (Fruit fly), this protein is Flap endonuclease 1.